The chain runs to 268 residues: uncharacterized protein (268 aa).

A helical transmembrane segment spans residues 150 to 172 (LYSIADFLAYTFTYFYLATVGLA).

Its subcellular location is the host membrane. This is an uncharacterized protein from Sulfolobus islandicus rod-shaped virus 1 (SIRV-1).